Here is a 207-residue protein sequence, read N- to C-terminus: ATP-dependent Clp protease proteolytic subunit (207 aa).

Serine 111 serves as the catalytic Nucleophile. Residue histidine 136 is part of the active site.

The protein belongs to the peptidase S14 family. In terms of assembly, fourteen ClpP subunits assemble into 2 heptameric rings which stack back to back to give a disk-like structure with a central cavity, resembling the structure of eukaryotic proteasomes.

The protein localises to the cytoplasm. The catalysed reaction is Hydrolysis of proteins to small peptides in the presence of ATP and magnesium. alpha-casein is the usual test substrate. In the absence of ATP, only oligopeptides shorter than five residues are hydrolyzed (such as succinyl-Leu-Tyr-|-NHMec, and Leu-Tyr-Leu-|-Tyr-Trp, in which cleavage of the -Tyr-|-Leu- and -Tyr-|-Trp bonds also occurs).. Functionally, cleaves peptides in various proteins in a process that requires ATP hydrolysis. Has a chymotrypsin-like activity. Plays a major role in the degradation of misfolded proteins. The chain is ATP-dependent Clp protease proteolytic subunit from Pectobacterium atrosepticum (strain SCRI 1043 / ATCC BAA-672) (Erwinia carotovora subsp. atroseptica).